Here is a 248-residue protein sequence, read N- to C-terminus: Type II methyltransferase M.AquIA (248 aa).

One can recognise an SAM-dependent MTase C5-type domain in the interval 3–248; sequence KKLISLFSGA…IKDRIKNHGY (246 aa). Residue Cys82 is part of the active site.

It belongs to the class I-like SAM-binding methyltransferase superfamily. C5-methyltransferase family. Heterodimer of an alpha and a beta subunit.

It catalyses the reaction a 2'-deoxycytidine in DNA + S-adenosyl-L-methionine = a 5-methyl-2'-deoxycytidine in DNA + S-adenosyl-L-homocysteine + H(+). Its function is as follows. A methylase, recognizes the double-stranded sequence 5'-CYCGRG-3', methylates C-1 on both strands, and protects the DNA from cleavage by the AquI endonuclease. The chain is Type II methyltransferase M.AquIA (aquIMA) from Picosynechococcus sp. (strain ATCC 27264 / PCC 7002 / PR-6) (Agmenellum quadruplicatum).